Here is a 111-residue protein sequence, read N- to C-terminus: Nucleoid-associated protein Cpar_0834 (111 aa).

This sequence belongs to the YbaB/EbfC family. Homodimer.

The protein localises to the cytoplasm. Its subcellular location is the nucleoid. Binds to DNA and alters its conformation. May be involved in regulation of gene expression, nucleoid organization and DNA protection. In Chlorobaculum parvum (strain DSM 263 / NCIMB 8327) (Chlorobium vibrioforme subsp. thiosulfatophilum), this protein is Nucleoid-associated protein Cpar_0834.